The sequence spans 396 residues: Ribosomal RNA large subunit methyltransferase I (396 aa).

The PUA domain occupies 2 to 81 (TVSIYLAKGR…EAIDKDFFVR (80 aa)).

Belongs to the methyltransferase superfamily. RlmI family.

Its subcellular location is the cytoplasm. It catalyses the reaction cytidine(1962) in 23S rRNA + S-adenosyl-L-methionine = 5-methylcytidine(1962) in 23S rRNA + S-adenosyl-L-homocysteine + H(+). Its function is as follows. Specifically methylates the cytosine at position 1962 (m5C1962) of 23S rRNA. This chain is Ribosomal RNA large subunit methyltransferase I, found in Aliivibrio fischeri (strain ATCC 700601 / ES114) (Vibrio fischeri).